The chain runs to 149 residues: Endoribonuclease YbeY (149 aa).

Zn(2+) contacts are provided by His-106, His-110, and His-116.

This sequence belongs to the endoribonuclease YbeY family. The cofactor is Zn(2+).

It localises to the cytoplasm. Its function is as follows. Single strand-specific metallo-endoribonuclease involved in late-stage 70S ribosome quality control and in maturation of the 3' terminus of the 16S rRNA. This is Endoribonuclease YbeY from Methylobacillus flagellatus (strain ATCC 51484 / DSM 6875 / VKM B-1610 / KT).